The chain runs to 674 residues: Transcription activator of gluconeogenesis PMAA_028970 (674 aa).

A disordered region spans residues 1–46 (MMDTDKDDLPSATDHSEHESGDAVKVEGGASKTASNSKDPSRPRRK). The segment covering 14–25 (DHSEHESGDAVK) has biased composition (basic and acidic residues). Positions 52 to 80 (CFACQRAHLTCGDERPCQRCIKRGLQDAC) form a DNA-binding region, zn(2)-C6 fungal-type. Disordered stretches follow at residues 117–181 (ISPT…ATPA), 250–321 (TGAG…SGLY), 344–374 (IGSN…SPMK), and 519–557 (NLNV…PGPN). Over residues 120-148 (TEYTQNGTNNAQQQQQKSGTIYASSTPSY) the composition is skewed to polar residues. Residues 149-163 (NNNNGTFDTNNATNT) are compositionally biased toward low complexity. Composition is skewed to polar residues over residues 269–278 (GQRSNSQQFG) and 285–294 (TTESPSQQSF). Low complexity-rich tracts occupy residues 348 to 366 (TFAS…IAPS) and 529 to 540 (NTSSQSDSTSSS).

Belongs to the ERT1/acuK family.

Its subcellular location is the nucleus. Transcription factor which regulates nonfermentable carbon utilization. Activator of gluconeogenetic genes. The protein is Transcription activator of gluconeogenesis PMAA_028970 of Talaromyces marneffei (strain ATCC 18224 / CBS 334.59 / QM 7333) (Penicillium marneffei).